The sequence spans 635 residues: Early transcription factor 70 kDa subunit (635 aa).

One can recognise a Helicase ATP-binding domain in the interval 32-185 (RSIIDENKSV…SNIISLMSDE (154 aa)). Residue 45-52 (HIMGSGKT) coordinates ATP. The short motif at 135–138 (DEAH) is the DEXH box element. Residues 326–505 (KFKYFITKIE…TLPFDIKKLL (180 aa)) form the Helicase C-terminal domain.

It belongs to the helicase family. VETF subfamily. Heterodimer of a 70 kDa and a 82 kDa subunit. Part of the early transcription complex composed of ETF, RAP94, and the DNA-directed RNA polymerase.

Its subcellular location is the virion. Its function is as follows. Acts with RNA polymerase to initiate transcription from early gene promoters. Is recruited by the RPO-associated protein of 94 kDa (RAP94) to form the early transcription complex, which also contains the core RNA polymerase. ETF heterodimer binds to early gene promoters. In Oryctolagus cuniculus (Rabbit), this protein is Early transcription factor 70 kDa subunit (VETFS).